We begin with the raw amino-acid sequence, 212 residues long: Holliday junction branch migration complex subunit RuvA (212 aa).

The tract at residues 1–70 is domain I; the sequence is MISYLKGSPI…EDQQILYGFS (70 aa). Positions 71–149 are domain II; the sequence is TTAERELFRQ…QWRKMVGVTV (79 aa). The segment at 150 to 160 is flexible linker; the sequence is TSSAAMPSLEI. Residues 160-212 form a domain III region; the sequence is ILEDIEMTLLALGYTNEEINKAISTLSQDNLMLKNTNTEEWIKEAIAWLSQGT.

The protein belongs to the RuvA family. Homotetramer. Forms an RuvA(8)-RuvB(12)-Holliday junction (HJ) complex. HJ DNA is sandwiched between 2 RuvA tetramers; dsDNA enters through RuvA and exits via RuvB. An RuvB hexamer assembles on each DNA strand where it exits the tetramer. Each RuvB hexamer is contacted by two RuvA subunits (via domain III) on 2 adjacent RuvB subunits; this complex drives branch migration. In the full resolvosome a probable DNA-RuvA(4)-RuvB(12)-RuvC(2) complex forms which resolves the HJ.

Its subcellular location is the cytoplasm. In terms of biological role, the RuvA-RuvB-RuvC complex processes Holliday junction (HJ) DNA during genetic recombination and DNA repair, while the RuvA-RuvB complex plays an important role in the rescue of blocked DNA replication forks via replication fork reversal (RFR). RuvA specifically binds to HJ cruciform DNA, conferring on it an open structure. The RuvB hexamer acts as an ATP-dependent pump, pulling dsDNA into and through the RuvAB complex. HJ branch migration allows RuvC to scan DNA until it finds its consensus sequence, where it cleaves and resolves the cruciform DNA. This chain is Holliday junction branch migration complex subunit RuvA, found in Crocosphaera subtropica (strain ATCC 51142 / BH68) (Cyanothece sp. (strain ATCC 51142)).